The primary structure comprises 65 residues: Small ribosomal subunit protein eS17 (65 aa).

This sequence belongs to the eukaryotic ribosomal protein eS17 family.

In Methanobrevibacter smithii (strain ATCC 35061 / DSM 861 / OCM 144 / PS), this protein is Small ribosomal subunit protein eS17.